A 610-amino-acid chain; its full sequence is Elongation factor 4 (610 aa).

One can recognise a tr-type G domain in the interval 11–193 (KYIRNFSIVA…QIVTKIPAPA (183 aa)). Residues 23 to 28 (DHGKST) and 140 to 143 (NKID) each bind GTP.

It belongs to the TRAFAC class translation factor GTPase superfamily. Classic translation factor GTPase family. LepA subfamily.

The protein localises to the cell membrane. The catalysed reaction is GTP + H2O = GDP + phosphate + H(+). Required for accurate and efficient protein synthesis under certain stress conditions. May act as a fidelity factor of the translation reaction, by catalyzing a one-codon backward translocation of tRNAs on improperly translocated ribosomes. Back-translocation proceeds from a post-translocation (POST) complex to a pre-translocation (PRE) complex, thus giving elongation factor G a second chance to translocate the tRNAs correctly. Binds to ribosomes in a GTP-dependent manner. The chain is Elongation factor 4 from Levilactobacillus brevis (strain ATCC 367 / BCRC 12310 / CIP 105137 / JCM 1170 / LMG 11437 / NCIMB 947 / NCTC 947) (Lactobacillus brevis).